Here is a 175-residue protein sequence, read N- to C-terminus: Transcription factor E (175 aa).

An HTH TFE/IIEalpha-type domain is found at 8-90; it reads NDPVIQKYLH…LWTFQYENIP (83 aa).

The protein belongs to the TFE family. Monomer. Interaction with RNA polymerase subunits RpoF and RpoE is necessary for Tfe stimulatory transcription activity. Able to interact with Tbp and RNA polymerase in the absence of DNA promoter. Interacts both with the preinitiation and elongation complexes.

Functionally, transcription factor that plays a role in the activation of archaeal genes transcribed by RNA polymerase. Facilitates transcription initiation by enhancing TATA-box recognition by TATA-box-binding protein (Tbp), and transcription factor B (Tfb) and RNA polymerase recruitment. Not absolutely required for transcription in vitro, but particularly important in cases where Tbp or Tfb function is not optimal. It dynamically alters the nucleic acid-binding properties of RNA polymerases by stabilizing the initiation complex and destabilizing elongation complexes. Seems to translocate with the RNA polymerase following initiation and acts by binding to the non template strand of the transcription bubble in elongation complexes. The protein is Transcription factor E of Natronomonas pharaonis (strain ATCC 35678 / DSM 2160 / CIP 103997 / JCM 8858 / NBRC 14720 / NCIMB 2260 / Gabara) (Halobacterium pharaonis).